A 282-amino-acid chain; its full sequence is tRNA pseudouridine synthase A (282 aa).

Asp51 (nucleophile) is an active-site residue. Tyr109 contributes to the substrate binding site.

The protein belongs to the tRNA pseudouridine synthase TruA family. Homodimer.

The catalysed reaction is uridine(38/39/40) in tRNA = pseudouridine(38/39/40) in tRNA. Functionally, formation of pseudouridine at positions 38, 39 and 40 in the anticodon stem and loop of transfer RNAs. This is tRNA pseudouridine synthase A from Delftia acidovorans (strain DSM 14801 / SPH-1).